A 330-amino-acid chain; its full sequence is Complement factor H-related protein 3 (330 aa).

The N-terminal stretch at M1 to G18 is a signal peptide. 5 consecutive Sushi domains span residues P22–L84, R85–R142, R144–N205, E208–H266, and P267–E330. 6 cysteine pairs are disulfide-bonded: C23-C72, C55-C83, C87-C129, C114-C140, C146-C192, and C175-C203. N-linked (GlcNAc...) asparagine glycosylation is present at N108. 2 N-linked (GlcNAc...) asparagine glycosylation sites follow: N185 and N205. 4 cysteine pairs are disulfide-bonded: C210-C253, C239-C264, C268-C319, and C302-C329. N309 is a glycosylation site (N-linked (GlcNAc...) asparagine).

Expressed by the liver and secreted in plasma.

The protein resides in the secreted. In terms of biological role, might be involved in complement regulation. This is Complement factor H-related protein 3 (CFHR3) from Homo sapiens (Human).